The following is a 1180-amino-acid chain: DNA-directed RNA polymerase subunit beta' (1180 aa).

Residues Cys-60, Cys-62, Cys-75, and Cys-78 each contribute to the Zn(2+) site. Residues Asp-449, Asp-451, and Asp-453 each contribute to the Mg(2+) site. Residues Cys-792, Cys-872, Cys-879, and Cys-882 each contribute to the Zn(2+) site.

The protein belongs to the RNA polymerase beta' chain family. The RNAP catalytic core consists of 2 alpha, 1 beta, 1 beta' and 1 omega subunit. When a sigma factor is associated with the core the holoenzyme is formed, which can initiate transcription. Requires Mg(2+) as cofactor. It depends on Zn(2+) as a cofactor.

It carries out the reaction RNA(n) + a ribonucleoside 5'-triphosphate = RNA(n+1) + diphosphate. In terms of biological role, DNA-dependent RNA polymerase catalyzes the transcription of DNA into RNA using the four ribonucleoside triphosphates as substrates. In Heliobacterium modesticaldum (strain ATCC 51547 / Ice1), this protein is DNA-directed RNA polymerase subunit beta'.